The following is a 696-amino-acid chain: HIPL2 protein (696 aa).

The N-terminal stretch at 1–24 is a signal peptide; the sequence is MAKTNQAITICSLLLLLLLSETTS. N-linked (GlcNAc...) asparagine glycans are attached at residues N38, N69, N74, N108, N124, N148, N175, N339, N431, N513, N519, N528, N581, and N651. S672 is lipidated: GPI-anchor amidated serine. A propeptide spans 673–696 (removed in mature form); that stretch reads SARKLCFSVFLLLSLLMMFLTLLD.

The protein belongs to the PQQ oxidoreductase GdhB family. The cofactor is pyrroloquinoline quinone.

It is found in the cell membrane. This is HIPL2 protein (HIPL2) from Arabidopsis thaliana (Mouse-ear cress).